Reading from the N-terminus, the 379-residue chain is Anomalous homeobox protein (379 aa).

Residues 135–196 (PEGLKSRNFP…NYRRRQRALP (62 aa)) constitute a DNA-binding region (homeobox). The segment at 195 to 283 (LPQHMKPAQQ…SKPLDVSGHP (89 aa)) is disordered. Residues 237–246 (QWSEEREEKG) are compositionally biased toward basic and acidic residues.

It localises to the nucleus. The protein is Anomalous homeobox protein (ANHX) of Homo sapiens (Human).